The sequence spans 449 residues: UDP-glycosyltransferase 76E6 (449 aa).

Residues Ser-274, 333 to 335, 350 to 358, and 372 to 375 each bind UDP-alpha-D-glucose; these read APQ, HCGWNSTLE, and HGEQ.

The protein belongs to the UDP-glycosyltransferase family.

The sequence is that of UDP-glycosyltransferase 76E6 (UGT76E6) from Arabidopsis thaliana (Mouse-ear cress).